The primary structure comprises 537 residues: Putative cysteine ligase BshC (537 aa).

Residues 422–450 (IEKVEGMIEQQRRLNKDLLDEVAGNQNNI) adopt a coiled-coil conformation.

This sequence belongs to the BshC family.

Functionally, involved in bacillithiol (BSH) biosynthesis. May catalyze the last step of the pathway, the addition of cysteine to glucosamine malate (GlcN-Mal) to generate BSH. This chain is Putative cysteine ligase BshC, found in Staphylococcus aureus (strain Mu3 / ATCC 700698).